Consider the following 786-residue polypeptide: Endonuclease MutS2 (786 aa).

Position 335-342 (335-342 (GPNTGGKT)) interacts with ATP. Residues 711–786 (LDLRGERFEN…GLGVTVVELK (76 aa)) enclose the Smr domain.

It belongs to the DNA mismatch repair MutS family. MutS2 subfamily. As to quaternary structure, homodimer. Binds to stalled ribosomes, contacting rRNA.

Functionally, endonuclease that is involved in the suppression of homologous recombination and thus may have a key role in the control of bacterial genetic diversity. Its function is as follows. Acts as a ribosome collision sensor, splitting the ribosome into its 2 subunits. Detects stalled/collided 70S ribosomes which it binds and splits by an ATP-hydrolysis driven conformational change. Acts upstream of the ribosome quality control system (RQC), a ribosome-associated complex that mediates the extraction of incompletely synthesized nascent chains from stalled ribosomes and their subsequent degradation. Probably generates substrates for RQC. In Bacillus cereus (strain AH820), this protein is Endonuclease MutS2.